Consider the following 248-residue polypeptide: Protein LIFEGUARD 3 (248 aa).

The next 7 helical transmembrane spans lie at 42–62 (VYSIIAFQLLATVAVAATVVT), 74–94 (GLGLALYIVIIITPLIVLCPL), 105–125 (YLLLGIFTLALAFVVGLTCAF), 130–150 (VILESVILTSVVVLSLTLYTF), 165–185 (FLFGALTVLIFFALIQILFPL), 188–208 (VSVMIYGCLVSIIFCGYIVYD), and 222–242 (IWAAVSLYLDIINLFLYLLTV).

This sequence belongs to the BI1 family.

The protein resides in the membrane. This is Protein LIFEGUARD 3 from Arabidopsis thaliana (Mouse-ear cress).